The chain runs to 421 residues: Probable G-protein coupled receptor 151 (421 aa).

Residues 1–44 are Extracellular-facing; it reads MGKATLAVFADSDSSNMNESFAHLHFAGGYLPSDSKGWRTIIPS. An N-linked (GlcNAc...) asparagine glycan is attached at N18. A helical membrane pass occupies residues 45 to 65; that stretch reads LLAAVCLVGFVGNLCVIGLLL. Over 66–74 the chain is Cytoplasmic; the sequence is HGVWKRKPS. A helical transmembrane segment spans residues 75–95; the sequence is MIHSLILNLSLADISLLLFSA. The Extracellular segment spans residues 96–122; that stretch reads PVRATAYVKGVWDLGWFVCKSSDWFTH. A disulfide bond links C114 and C190. Residues 123–143 form a helical membrane-spanning segment; that stretch reads MCMAAKSLTFVVVAKVCFMYA. Over 144-156 the chain is Cytoplasmic; sequence SDPAKPVGTHNCT. Residues 157-177 traverse the membrane as a helical segment; the sequence is IWSLLGAIWVVASLLPLPEWF. Topologically, residues 178-204 are extracellular; sequence FSTTRHHAGVEMCLVDVPAVAAEFMSL. The chain crosses the membrane as a helical span at residues 205 to 225; sequence FGKLYPLLVFCLPLLLAGFYF. At 226–258 the chain is on the cytoplasmic side; the sequence is WRAYNQCKIRCAKTQNLRNQMRSKQLTVMLLST. A helical transmembrane segment spans residues 259-279; the sequence is AVTSALLWLPEWIAWLWVWHL. Over 280-289 the chain is Extracellular; it reads KAGGPMPPQG. The chain crosses the membrane as a helical span at residues 290-310; the sequence is FIALSQVLMFSISTVNPLIFL. Residues 311-421 are Cytoplasmic-facing; that stretch reads MMSEEFKAGL…HEGQETKGCN (111 aa). Disordered regions lie at residues 346–381 and 394–421; these read IETL…TDKV and HERD…KGCN. Composition is skewed to basic and acidic residues over residues 364-379 and 409-421; these read DTDR…ETTD and PWEH…KGCN.

This sequence belongs to the G-protein coupled receptor 1 family. As to expression, exclusively expressed in neurons of the habenular complex. The expression is particularly prominent in the medial habenular nucleus, whereas the lateral habenular nucleus exhibited a lower level of expression.

It localises to the cell membrane. Orphan receptor. This is Probable G-protein coupled receptor 151 (Gpr151) from Rattus norvegicus (Rat).